The following is a 407-amino-acid chain: Na(+)-translocating NADH-quinone reductase subunit F (407 aa).

A helical transmembrane segment spans residues 3–23; the sequence is IILGVVMFTLIVLALTVMILF. The 95-residue stretch at 32 to 126 folds into the 2Fe-2S ferredoxin-type domain; it reads GDITVEINED…NLKIELPEEI (95 aa). Residues cysteine 69, cysteine 75, cysteine 78, and cysteine 110 each contribute to the [2Fe-2S] cluster site. The 141-residue stretch at 129–269 folds into the FAD-binding FR-type domain; that stretch reads VKKWTCEVIS…SGPFGEFFAK (141 aa).

This sequence belongs to the NqrF family. As to quaternary structure, composed of six subunits; NqrA, NqrB, NqrC, NqrD, NqrE and NqrF. It depends on [2Fe-2S] cluster as a cofactor. FAD is required as a cofactor.

The protein resides in the cell inner membrane. The enzyme catalyses a ubiquinone + n Na(+)(in) + NADH + H(+) = a ubiquinol + n Na(+)(out) + NAD(+). NQR complex catalyzes the reduction of ubiquinone-1 to ubiquinol by two successive reactions, coupled with the transport of Na(+) ions from the cytoplasm to the periplasm. The first step is catalyzed by NqrF, which accepts electrons from NADH and reduces ubiquinone-1 to ubisemiquinone by a one-electron transfer pathway. This Yersinia pseudotuberculosis serotype I (strain IP32953) protein is Na(+)-translocating NADH-quinone reductase subunit F.